Reading from the N-terminus, the 306-residue chain is MSKASKTAAADASITTGSARVKRGFADKLKGGVIMDVVTPEQAKIAEDAGASAVMALERVPADIRAQGGVSRMSDPDMIAGIIDAVEIPVMAKARIGHFVEAEVLEALGVDFIDESEVLSPADYKNHIDKFDFETPFVCGATNLGEALRRINEGAAMIRSKGEAGTGDVSNAVTHMRTIRAEINRLSNMAEDELYVAAKELAAPYELVVEVARNGKLPVTLFTAGGIATPADAAMMMHLGAEGVFVGSGIFKSGNPAQRAAAIVKATQNYQDPKVIADVSRGLGEAMVGINVDELPVSHRLAERGW.

Asp36 contributes to the D-ribose 5-phosphate binding site. Lys93 acts as the Schiff-base intermediate with D-ribose 5-phosphate in catalysis. Residue Gly165 participates in D-ribose 5-phosphate binding. D-glyceraldehyde 3-phosphate is bound at residue Arg177. D-ribose 5-phosphate-binding positions include Gly226 and 247–248 (GS).

It belongs to the PdxS/SNZ family. As to quaternary structure, in the presence of PdxT, forms a dodecamer of heterodimers.

It catalyses the reaction aldehydo-D-ribose 5-phosphate + D-glyceraldehyde 3-phosphate + L-glutamine = pyridoxal 5'-phosphate + L-glutamate + phosphate + 3 H2O + H(+). It participates in cofactor biosynthesis; pyridoxal 5'-phosphate biosynthesis. Catalyzes the formation of pyridoxal 5'-phosphate from ribose 5-phosphate (RBP), glyceraldehyde 3-phosphate (G3P) and ammonia. The ammonia is provided by the PdxT subunit. Can also use ribulose 5-phosphate and dihydroxyacetone phosphate as substrates, resulting from enzyme-catalyzed isomerization of RBP and G3P, respectively. This chain is Pyridoxal 5'-phosphate synthase subunit PdxS, found in Corynebacterium urealyticum (strain ATCC 43042 / DSM 7109).